A 342-amino-acid chain; its full sequence is GTPase Obg (342 aa).

The Obg domain occupies methionine 1–leucine 159. The region spanning alanine 160–glutamate 328 is the OBG-type G domain. Residues glycine 166–serine 173, phenylalanine 191–isoleucine 195, aspartate 213–glycine 216, asparagine 280–aspartate 283, and serine 309–valine 311 contribute to the GTP site. Mg(2+) is bound by residues serine 173 and threonine 193.

Belongs to the TRAFAC class OBG-HflX-like GTPase superfamily. OBG GTPase family. Monomer. Mg(2+) is required as a cofactor.

It localises to the cytoplasm. An essential GTPase which binds GTP, GDP and possibly (p)ppGpp with moderate affinity, with high nucleotide exchange rates and a fairly low GTP hydrolysis rate. Plays a role in control of the cell cycle, stress response, ribosome biogenesis and in those bacteria that undergo differentiation, in morphogenesis control. This chain is GTPase Obg, found in Microcystis aeruginosa (strain NIES-843 / IAM M-2473).